A 238-amino-acid chain; its full sequence is 2-C-methyl-D-erythritol 4-phosphate cytidylyltransferase (238 aa).

It belongs to the IspD/TarI cytidylyltransferase family. IspD subfamily.

The enzyme catalyses 2-C-methyl-D-erythritol 4-phosphate + CTP + H(+) = 4-CDP-2-C-methyl-D-erythritol + diphosphate. The protein operates within isoprenoid biosynthesis; isopentenyl diphosphate biosynthesis via DXP pathway; isopentenyl diphosphate from 1-deoxy-D-xylulose 5-phosphate: step 2/6. Catalyzes the formation of 4-diphosphocytidyl-2-C-methyl-D-erythritol from CTP and 2-C-methyl-D-erythritol 4-phosphate (MEP). The chain is 2-C-methyl-D-erythritol 4-phosphate cytidylyltransferase from Aliivibrio fischeri (strain MJ11) (Vibrio fischeri).